The primary structure comprises 375 residues: Glutamate 5-kinase (375 aa).

Lys17 serves as a coordination point for ATP. Substrate-binding residues include Ser57, Asp144, and Asn158. ATP is bound at residue Thr178–Asp179. The PUA domain maps to Ser284 to Lys360.

This sequence belongs to the glutamate 5-kinase family.

It is found in the cytoplasm. The catalysed reaction is L-glutamate + ATP = L-glutamyl 5-phosphate + ADP. It participates in amino-acid biosynthesis; L-proline biosynthesis; L-glutamate 5-semialdehyde from L-glutamate: step 1/2. Functionally, catalyzes the transfer of a phosphate group to glutamate to form L-glutamate 5-phosphate. This chain is Glutamate 5-kinase, found in Methanococcoides burtonii (strain DSM 6242 / NBRC 107633 / OCM 468 / ACE-M).